Here is a 290-residue protein sequence, read N- to C-terminus: Protein SSO1 (290 aa).

Residues 1–265 are Cytoplasmic-facing; that stretch reads MSYNNPYQLE…ARKARKNKIR (265 aa). Residues 190–252 enclose the t-SNARE coiled-coil homology domain; that stretch reads LAEVQARHQE…EQGVGHTDKA (63 aa). The helical; Anchor for type IV membrane protein transmembrane segment at 266–287 threads the bilayer; that stretch reads CWLIVFAIIVVVVVVVVVPAVV. At 288-290 the chain is on the extracellular side; the sequence is KTR.

Belongs to the syntaxin family.

It is found in the membrane. Its function is as follows. Required for vesicle fusion with the plasma membrane. The chain is Protein SSO1 (SSO1) from Saccharomyces cerevisiae (strain ATCC 204508 / S288c) (Baker's yeast).